Here is a 360-residue protein sequence, read N- to C-terminus: Chorismate synthase (360 aa).

Positions 48 and 54 each coordinate NADP(+). FMN is bound by residues 125–127 (RSS), 246–247 (NA), G286, 301–305 (KPTSS), and R327.

It belongs to the chorismate synthase family. In terms of assembly, homotetramer. It depends on FMNH2 as a cofactor.

It carries out the reaction 5-O-(1-carboxyvinyl)-3-phosphoshikimate = chorismate + phosphate. The protein operates within metabolic intermediate biosynthesis; chorismate biosynthesis; chorismate from D-erythrose 4-phosphate and phosphoenolpyruvate: step 7/7. Functionally, catalyzes the anti-1,4-elimination of the C-3 phosphate and the C-6 proR hydrogen from 5-enolpyruvylshikimate-3-phosphate (EPSP) to yield chorismate, which is the branch point compound that serves as the starting substrate for the three terminal pathways of aromatic amino acid biosynthesis. This reaction introduces a second double bond into the aromatic ring system. The chain is Chorismate synthase from Glaesserella parasuis serovar 5 (strain SH0165) (Haemophilus parasuis).